Consider the following 548-residue polypeptide: Membrane protein insertase YidC (548 aa).

A helical membrane pass occupies residues 6–26; sequence NLLVIALLFVSFMIWQAWEQD. The tract at residues 28 to 55 is disordered; that stretch reads NPQPQAQQTTQTTTTAAGSAADQGVPAS. Low complexity predominate over residues 30–50; sequence QPQAQQTTQTTTTAAGSAADQ. Transmembrane regions (helical) follow at residues 350-370, 420-440, 458-478, and 499-519; these read FVGN…GIMY, LGGC…YYML, LSAQ…MFFI, and PVIF…YYIV.

The protein belongs to the OXA1/ALB3/YidC family. Type 1 subfamily. As to quaternary structure, interacts with the Sec translocase complex via SecD. Specifically interacts with transmembrane segments of nascent integral membrane proteins during membrane integration.

The protein localises to the cell inner membrane. Its function is as follows. Required for the insertion and/or proper folding and/or complex formation of integral membrane proteins into the membrane. Involved in integration of membrane proteins that insert both dependently and independently of the Sec translocase complex, as well as at least some lipoproteins. Aids folding of multispanning membrane proteins. This is Membrane protein insertase YidC from Escherichia fergusonii (strain ATCC 35469 / DSM 13698 / CCUG 18766 / IAM 14443 / JCM 21226 / LMG 7866 / NBRC 102419 / NCTC 12128 / CDC 0568-73).